The following is a 397-amino-acid chain: Acetate kinase (397 aa).

A Mg(2+)-binding site is contributed by asparagine 8. Lysine 15 serves as a coordination point for ATP. Arginine 92 is a binding site for substrate. The active-site Proton donor/acceptor is aspartate 149. ATP contacts are provided by residues 209–213 (HLGNG), 283–285 (DFR), and 331–335 (GVGEN). Glutamate 385 is a binding site for Mg(2+).

The protein belongs to the acetokinase family. As to quaternary structure, homodimer. It depends on Mg(2+) as a cofactor. Requires Mn(2+) as cofactor.

Its subcellular location is the cytoplasm. It catalyses the reaction acetate + ATP = acetyl phosphate + ADP. The protein operates within metabolic intermediate biosynthesis; acetyl-CoA biosynthesis; acetyl-CoA from acetate: step 1/2. Its function is as follows. Catalyzes the formation of acetyl phosphate from acetate and ATP. Can also catalyze the reverse reaction. This is Acetate kinase from Corynebacterium glutamicum (strain ATCC 13032 / DSM 20300 / JCM 1318 / BCRC 11384 / CCUG 27702 / LMG 3730 / NBRC 12168 / NCIMB 10025 / NRRL B-2784 / 534).